The following is a 269-amino-acid chain: NAD-capped RNA hydrolase NudC (269 aa).

Arginine 74 is a binding site for substrate. Zn(2+) contacts are provided by cysteine 103, cysteine 106, cysteine 121, and cysteine 124. Substrate is bound at residue tyrosine 129. The region spanning proline 130–threonine 253 is the Nudix hydrolase domain. Alanine 163, glutamate 179, and glutamate 183 together coordinate a divalent metal cation. Positions glycine 164–glycine 185 match the Nudix box motif. Residue glutamine 197–serine 204 participates in substrate binding. A divalent metal cation is bound at residue glutamate 224. Alanine 246 is a binding site for substrate.

The protein belongs to the Nudix hydrolase family. NudC subfamily. As to quaternary structure, homodimer. Mg(2+) serves as cofactor. The cofactor is Mn(2+). Requires Zn(2+) as cofactor.

The catalysed reaction is a 5'-end NAD(+)-phospho-ribonucleoside in mRNA + H2O = a 5'-end phospho-adenosine-phospho-ribonucleoside in mRNA + beta-nicotinamide D-ribonucleotide + 2 H(+). It catalyses the reaction NAD(+) + H2O = beta-nicotinamide D-ribonucleotide + AMP + 2 H(+). The enzyme catalyses NADH + H2O = reduced beta-nicotinamide D-ribonucleotide + AMP + 2 H(+). MRNA decapping enzyme that specifically removes the nicotinamide adenine dinucleotide (NAD) cap from a subset of mRNAs by hydrolyzing the diphosphate linkage to produce nicotinamide mononucleotide (NMN) and 5' monophosphate mRNA. The NAD-cap is present at the 5'-end of some mRNAs and stabilizes RNA against 5'-processing. Has preference for mRNAs with a 5'-end purine. Catalyzes the hydrolysis of a broad range of dinucleotide pyrophosphates. This is NAD-capped RNA hydrolase NudC from Vibrio atlanticus (strain LGP32) (Vibrio splendidus (strain Mel32)).